The following is a 125-amino-acid chain: Small ribosomal subunit protein uS13 (125 aa).

Residues histidine 91–lysine 125 are disordered.

It belongs to the universal ribosomal protein uS13 family. As to quaternary structure, part of the 30S ribosomal subunit. Forms a loose heterodimer with protein S19. Forms two bridges to the 50S subunit in the 70S ribosome.

Located at the top of the head of the 30S subunit, it contacts several helices of the 16S rRNA. In the 70S ribosome it contacts the 23S rRNA (bridge B1a) and protein L5 of the 50S subunit (bridge B1b), connecting the 2 subunits; these bridges are implicated in subunit movement. Contacts the tRNAs in the A and P-sites. The protein is Small ribosomal subunit protein uS13 of Chloroherpeton thalassium (strain ATCC 35110 / GB-78).